The chain runs to 258 residues: Thrombin-like enzyme CPI-enzyme 2 (258 aa).

Positions 1 to 18 (MVLIRVLANLLILQLSYA) are cleaved as a signal peptide. A propeptide spanning residues 19 to 24 (QKSSEL) is cleaved from the precursor. Positions 25–249 (VIGGDECNIN…YTDWIENIIA (225 aa)) constitute a Peptidase S1 domain. Intrachain disulfides connect Cys31-Cys163, Cys50-Cys66, Cys98-Cys256, Cys142-Cys210, Cys174-Cys189, and Cys200-Cys225. N-linked (GlcNAc...) asparagine glycosylation is present at Asn44. His65 functions as the Charge relay system in the catalytic mechanism. Asn79 and Asn103 each carry an N-linked (GlcNAc...) asparagine glycan. Asp110 (charge relay system) is an active-site residue. Residue Asn121 is glycosylated (N-linked (GlcNAc...) asparagine). The active-site Charge relay system is Ser204.

This sequence belongs to the peptidase S1 family. Snake venom subfamily. Monomer. N-glycosylated. As to expression, expressed by the venom gland.

It is found in the secreted. In terms of biological role, thrombin-like snake venom serine protease that cleaves fibrinogen beta (FGB) releasing fibrinopeptide B. Promotes capillary permeability-increasing activity through the release of peptides from the beta-chain of fibrinogen. This is Thrombin-like enzyme CPI-enzyme 2 from Gloydius ussuriensis (Ussuri mamushi).